The following is a 3912-amino-acid chain: Chondramide synthase cmdD (3912 aa).

One can recognise a Carrier 1 domain in the interval 1411 to 1485; the sequence is APRNAREETL…ALAEVASASK (75 aa). Residue Ser-1446 is modified to O-(pantetheine 4'-phosphoryl)serine. Residues 1995–2029 are compositionally biased toward acidic residues; it reads ADEDDEEDDELDEEFDAEVDEEDEDEEEEEDDDGE. The segment at 1995 to 2030 is disordered; the sequence is ADEDDEEDDELDEEFDAEVDEEDEDEEEEEDDDGEN. The 76-residue stretch at 2989-3064 folds into the Carrier 2 domain; it reads APRTATEETL…VLARVIDEAL (76 aa). Ser-3024 bears the O-(pantetheine 4'-phosphoryl)serine mark.

This sequence belongs to the ATP-dependent AMP-binding enzyme family. It depends on pantetheine 4'-phosphate as a cofactor.

Functionally, involved in the synthesis of chondramides. Activates R-beta-tyrosine and probably phenylalanine. This Chondromyces crocatus protein is Chondramide synthase cmdD.